The chain runs to 498 residues: Lysine--tRNA ligase (498 aa).

Mg(2+)-binding residues include glutamate 407 and glutamate 414.

It belongs to the class-II aminoacyl-tRNA synthetase family. Homodimer. Mg(2+) serves as cofactor.

It localises to the cytoplasm. It catalyses the reaction tRNA(Lys) + L-lysine + ATP = L-lysyl-tRNA(Lys) + AMP + diphosphate. The chain is Lysine--tRNA ligase from Sinorhizobium medicae (strain WSM419) (Ensifer medicae).